We begin with the raw amino-acid sequence, 289 residues long: ATP phosphoribosyltransferase (289 aa).

It belongs to the ATP phosphoribosyltransferase family. Long subfamily. Mg(2+) serves as cofactor.

It localises to the cytoplasm. It carries out the reaction 1-(5-phospho-beta-D-ribosyl)-ATP + diphosphate = 5-phospho-alpha-D-ribose 1-diphosphate + ATP. It functions in the pathway amino-acid biosynthesis; L-histidine biosynthesis; L-histidine from 5-phospho-alpha-D-ribose 1-diphosphate: step 1/9. Feedback inhibited by histidine. Its function is as follows. Catalyzes the condensation of ATP and 5-phosphoribose 1-diphosphate to form N'-(5'-phosphoribosyl)-ATP (PR-ATP). Has a crucial role in the pathway because the rate of histidine biosynthesis seems to be controlled primarily by regulation of HisG enzymatic activity. The protein is ATP phosphoribosyltransferase of Koribacter versatilis (strain Ellin345).